Here is a 103-residue protein sequence, read N- to C-terminus: Co-chaperonin GroES (103 aa).

The protein belongs to the GroES chaperonin family. In terms of assembly, heptamer of 7 subunits arranged in a ring. Interacts with the chaperonin GroEL.

It is found in the cytoplasm. Functionally, together with the chaperonin GroEL, plays an essential role in assisting protein folding. The GroEL-GroES system forms a nano-cage that allows encapsulation of the non-native substrate proteins and provides a physical environment optimized to promote and accelerate protein folding. GroES binds to the apical surface of the GroEL ring, thereby capping the opening of the GroEL channel. The sequence is that of Co-chaperonin GroES from Picosynechococcus sp. (strain ATCC 27264 / PCC 7002 / PR-6) (Agmenellum quadruplicatum).